The following is a 247-amino-acid chain: Ubiquinone biosynthesis O-methyltransferase (247 aa).

Positions 40, 71, 92, and 135 each coordinate S-adenosyl-L-methionine.

Belongs to the methyltransferase superfamily. UbiG/COQ3 family.

The enzyme catalyses a 3-demethylubiquinol + S-adenosyl-L-methionine = a ubiquinol + S-adenosyl-L-homocysteine + H(+). It carries out the reaction a 3-(all-trans-polyprenyl)benzene-1,2-diol + S-adenosyl-L-methionine = a 2-methoxy-6-(all-trans-polyprenyl)phenol + S-adenosyl-L-homocysteine + H(+). Its pathway is cofactor biosynthesis; ubiquinone biosynthesis. O-methyltransferase that catalyzes the 2 O-methylation steps in the ubiquinone biosynthetic pathway. The sequence is that of Ubiquinone biosynthesis O-methyltransferase from Ruegeria sp. (strain TM1040) (Silicibacter sp.).